We begin with the raw amino-acid sequence, 222 residues long: Uracil-DNA glycosylase (222 aa).

The Proton acceptor role is filled by D61.

Belongs to the uracil-DNA glycosylase (UDG) superfamily. UNG family.

The protein localises to the cytoplasm. The enzyme catalyses Hydrolyzes single-stranded DNA or mismatched double-stranded DNA and polynucleotides, releasing free uracil.. Functionally, excises uracil residues from the DNA which can arise as a result of misincorporation of dUMP residues by DNA polymerase or due to deamination of cytosine. In Actinobacillus succinogenes (strain ATCC 55618 / DSM 22257 / CCUG 43843 / 130Z), this protein is Uracil-DNA glycosylase.